A 325-amino-acid polypeptide reads, in one-letter code: Melanocortin receptor 5 (325 aa).

Over 1-37 the chain is Extracellular; the sequence is MNSSFHLHFLDLNLNATEGNLSGPNVKNKSSPCEDMG. N-linked (GlcNAc...) asparagine glycosylation is found at Asn-2, Asn-15, Asn-20, and Asn-28. The chain crosses the membrane as a helical span at residues 38 to 61; that stretch reads IAVEVFLTLGVISLLENILVIGAI. Topologically, residues 62–73 are cytoplasmic; that stretch reads VKNKNLHSPMYF. A helical transmembrane segment spans residues 74-97; the sequence is FVCSLAVADMLVSMSSAWETITIY. Topologically, residues 98 to 114 are extracellular; sequence LLNNKHLVIADAFVRHI. Residues 115–138 form a helical membrane-spanning segment; it reads DNVFDSMICISVVASMCSLLAIAV. Residues 139 to 155 are Cytoplasmic-facing; sequence DRYVTIFYALRYHHIMT. Residues 156–179 form a helical membrane-spanning segment; sequence ARRSGAIIAGIWAFCTGCGIVFIL. Residues 180–186 lie on the Extracellular side of the membrane; the sequence is YSESTYV. A helical transmembrane segment spans residues 187–211; that stretch reads ILCLISMFFAMLFLLVSLYIHMFLL. The Cytoplasmic segment spans residues 212–239; it reads ARTHVKRIAALPRASSARQRTSMQGAVT. Residues 240-265 form a helical membrane-spanning segment; the sequence is VTMLLGVFTVCWAPFFLHLTLMLSCP. Topologically, residues 266-273 are extracellular; that stretch reads QNLYCSCF. The chain crosses the membrane as a helical span at residues 274–297; the sequence is MSHFNMYLILIMCNSVMDPLIYAF. The Cytoplasmic portion of the chain corresponds to 298–325; sequence RSQEMRKTFKEIICCRGFRIACSFPRRD. 2 S-palmitoyl cysteine lipidation sites follow: Cys-311 and Cys-312.

Belongs to the G-protein coupled receptor 1 family.

Its subcellular location is the cell membrane. Functionally, receptor for MSH (alpha, beta and gamma) and ACTH. The activity of this receptor is mediated by G proteins which activate adenylate cyclase. This receptor is a possible mediator of the immunomodulation properties of melanocortins. The polypeptide is Melanocortin receptor 5 (MC5R) (Pan troglodytes (Chimpanzee)).